The sequence spans 78 residues: Large ribosomal subunit protein bL28 (78 aa).

The segment at 1 to 21 is disordered; sequence MSRVCQVTGKKPMVGNNRSHA.

This sequence belongs to the bacterial ribosomal protein bL28 family.

The protein is Large ribosomal subunit protein bL28 of Shewanella piezotolerans (strain WP3 / JCM 13877).